Here is a 706-residue protein sequence, read N- to C-terminus: Phosphatase and actin regulator 4 (706 aa).

The stretch at 42–67 is one RPEL 1 repeat; it reads EVLERKISMRKPREELVKRGLLVEVP. Disordered stretches follow at residues 65 to 123, 196 to 380, 385 to 404, and 459 to 579; these read EVPE…QPCA, VHPR…HIPV, VPMLTLAPPNTEVEKEQSAS, and LKVP…REEW. Residues 106–121 are compositionally biased toward polar residues; the sequence is DSTGSRPKSGETTVQP. Residues 200–211 are compositionally biased toward basic and acidic residues; the sequence is HLSEKNSEKYRP. Positions 266 to 276 are enriched in polar residues; sequence DPSTRQQSSVP. Over residues 290–299 the composition is skewed to pro residues; the sequence is KQPPVPPPKP. Acidic residues-rich tracts occupy residues 463 to 476, 508 to 523, and 531 to 541; these read DDDDDDNSLEDESL, QEEEEEEEEGVSDTDS, and EDDEEEEEEET. Residues 563-579 show a composition bias toward basic and acidic residues; the sequence is GPHDSNPEFPQRSREEW. RPEL repeat units lie at residues 588-613 and 625-650; these read SQLNRRLSQRPSAEELEQRNILQKNE and RRLTRKLSQRPTVAELVERKILRFNE.

The protein belongs to the phosphatase and actin regulator family. As to quaternary structure, binds ppp1ca and actin.

The protein localises to the cytoplasm. The protein resides in the cell projection. Its subcellular location is the lamellipodium. Regulator of protein phosphatase 1 (PP1) required for neural tube and optic fissure closure, and enteric neural crest cell (ENCCs) migration during development. Acts as an activator of PP1. During neural tube closure, localizes to the ventral neural tube and activates PP1, leading to down-regulate cell proliferation within cranial neural tissue and the neural retina. Also acts as a regulator of migration of enteric neural crest cells (ENCCs) by activating PP1, leading to repression of the integrin signaling through the rho/rock pathway. The sequence is that of Phosphatase and actin regulator 4 (phactr4) from Xenopus tropicalis (Western clawed frog).